The chain runs to 615 residues: Gluconate 2-dehydrogenase flavoprotein (615 aa).

A signal peptide spans 1-22 (MERGERVSVPVSGYSRGEGVTV). Histidine 542 acts as the Proton acceptor in catalysis.

It belongs to the GMC oxidoreductase family. As to quaternary structure, heterotrimer. Requires FAD as cofactor.

Its subcellular location is the cell membrane. The enzyme catalyses D-gluconate + A = 2-dehydro-D-gluconate + AH2. Functionally, part of the heterotrimer that catalyzes the conversion of D-gluconate to 2-dehydro-D-gluconate. This subunit functions as the dehydrogenase. In Pantoea cypripedii (Pectobacterium cypripedii), this protein is Gluconate 2-dehydrogenase flavoprotein.